The primary structure comprises 680 residues: Probable oxidoreductase YoaE (680 aa).

The 4Fe-4S Mo/W bis-MGD-type domain occupies 9-66 (NGIFKSVCSLDCPDQCGLLIHKKDGKIVKVQGDPDHPVTAGNICNKVRNMTERIYDEK). C16, C20, C24, and C52 together coordinate [4Fe-4S] cluster.

It belongs to the prokaryotic molybdopterin-containing oxidoreductase family. Mo-bis(molybdopterin guanine dinucleotide) is required as a cofactor.

The chain is Probable oxidoreductase YoaE (yoaE) from Bacillus subtilis (strain 168).